Reading from the N-terminus, the 308-residue chain is tRNA dimethylallyltransferase (308 aa).

14–21 serves as a coordination point for ATP; it reads GPTASGKT. Substrate is bound at residue 16 to 21; it reads TASGKT. Interaction with substrate tRNA stretches follow at residues 39–42, 163–167, and 244–249; these read DSAL, QRLSR, and RCVGYR.

Belongs to the IPP transferase family. As to quaternary structure, monomer. The cofactor is Mg(2+).

It catalyses the reaction adenosine(37) in tRNA + dimethylallyl diphosphate = N(6)-dimethylallyladenosine(37) in tRNA + diphosphate. Its function is as follows. Catalyzes the transfer of a dimethylallyl group onto the adenine at position 37 in tRNAs that read codons beginning with uridine, leading to the formation of N6-(dimethylallyl)adenosine (i(6)A). The sequence is that of tRNA dimethylallyltransferase from Shewanella baltica (strain OS223).